The primary structure comprises 177 residues: ATP synthase subunit delta (177 aa).

The protein belongs to the ATPase delta chain family. In terms of assembly, F-type ATPases have 2 components, F(1) - the catalytic core - and F(0) - the membrane proton channel. F(1) has five subunits: alpha(3), beta(3), gamma(1), delta(1), epsilon(1). F(0) has three main subunits: a(1), b(2) and c(10-14). The alpha and beta chains form an alternating ring which encloses part of the gamma chain. F(1) is attached to F(0) by a central stalk formed by the gamma and epsilon chains, while a peripheral stalk is formed by the delta and b chains.

It localises to the cell inner membrane. In terms of biological role, f(1)F(0) ATP synthase produces ATP from ADP in the presence of a proton or sodium gradient. F-type ATPases consist of two structural domains, F(1) containing the extramembraneous catalytic core and F(0) containing the membrane proton channel, linked together by a central stalk and a peripheral stalk. During catalysis, ATP synthesis in the catalytic domain of F(1) is coupled via a rotary mechanism of the central stalk subunits to proton translocation. This protein is part of the stalk that links CF(0) to CF(1). It either transmits conformational changes from CF(0) to CF(1) or is implicated in proton conduction. In Vibrio cholerae serotype O1 (strain ATCC 39541 / Classical Ogawa 395 / O395), this protein is ATP synthase subunit delta.